The chain runs to 389 residues: MNKYIIFDNTKLLEYIGKNSLITPCYIYDLELLEDTFLNAKKSLDKNFKNAEIHYAIKANHNPKIVGIAKKYGMGIDCVSGGEIKRALEQKVDSQHIVFARFEIELAIDNDIFAFNSESLEEIQVINQIAQRKNKQVNICLRVNPNIDAQTHHYISTGQFDDKFGIAFVDILNWLKDEYRNFANINIIGLHYHVGSQILNYQVFQSLAITTNEHIKLLRQNDINIKHINFGGGLGIDYQNPQQNPIVDFDGYFARFREFFKYSDELVLHFELGRSLVGQSGVLVSQVLFNKVTQGTHFVIIDAGMTELIRPALYQAQHKIAALIDENINQKQHYHIVGPICESSDVFAKYYQLPKLKRGDLLAIYSAGAYGKVLASEYNLRPSVQEYFI.

An N6-(pyridoxal phosphate)lysine modification is found at Lys-58. Residues Gly-233 and Glu-271–Arg-274 each bind pyridoxal 5'-phosphate. Arg-274, Arg-310, Tyr-314, Glu-342, and Tyr-370 together coordinate substrate. A pyridoxal 5'-phosphate-binding site is contributed by Tyr-370.

The protein belongs to the Orn/Lys/Arg decarboxylase class-II family. LysA subfamily. As to quaternary structure, homodimer. Requires pyridoxal 5'-phosphate as cofactor.

It carries out the reaction meso-2,6-diaminopimelate + H(+) = L-lysine + CO2. It functions in the pathway amino-acid biosynthesis; L-lysine biosynthesis via DAP pathway; L-lysine from DL-2,6-diaminopimelate: step 1/1. Its function is as follows. Specifically catalyzes the decarboxylation of meso-diaminopimelate (meso-DAP) to L-lysine. The protein is Diaminopimelate decarboxylase of Francisella tularensis subsp. holarctica (strain LVS).